The chain runs to 156 residues: Probable low-salt glycan biosynthesis epimerase Agl13 (156 aa).

Substrate is bound by residues Arg19, Glu24, 39-41 (MSY), Arg51, His54, and His109.

The protein belongs to the dTDP-4-dehydrorhamnose 3,5-epimerase family.

The protein operates within protein modification; protein glycosylation. Its pathway is cell surface structure biogenesis; S-layer biogenesis. In terms of biological role, epimerase involved in N-glycan biosynthetic pathway that takes place under low-salt conditions (1.75 M instead of 3.4 M). Participates in the formation of the tetrasaccharide present at 'Asn-532' of S-layer glycoprotein Csg, consisting of a sulfated hexose, 2 hexoses and rhamnose. Involved in the addition of final rhamnose (sugar 4) of the tetrasaccharide on the dolichol phosphate carrier. This Haloferax volcanii (strain ATCC 29605 / DSM 3757 / JCM 8879 / NBRC 14742 / NCIMB 2012 / VKM B-1768 / DS2) (Halobacterium volcanii) protein is Probable low-salt glycan biosynthesis epimerase Agl13 (agl13).